The following is an 829-amino-acid chain: Exocyst complex component SEC10b (829 aa).

The stretch at 244 to 266 forms a coiled coil; it reads RGLEVAVANLQDYCNELENRLLS.

It belongs to the SEC10 family. As to quaternary structure, the exocyst complex is composed of SEC3, SEC5, SEC6, SEC8, SEC10, EXO70A1 and EXO84B. Interacts with EXO84B. Binds to EXO70E2. As to expression, expressed in seedlings, roots, leaves and flowers.

It localises to the cytoplasm. The protein resides in the cytosol. Its subcellular location is the secreted. The protein localises to the extracellular exosome. Its function is as follows. Component of the exocyst complex involved in the docking of exocytic vesicles with fusion sites on the plasma membrane during regulated or polarized secretion. Involved in polarized cell growth and organ morphogenesis. During cytokinesis, involved in cell plate initiation, cell plate maturation and formation of new primary cell wall. This is Exocyst complex component SEC10b from Arabidopsis thaliana (Mouse-ear cress).